Consider the following 99-residue polypeptide: Putative membrane protein insertion efficiency factor (99 aa).

Belongs to the UPF0161 family.

The protein resides in the cell inner membrane. Functionally, could be involved in insertion of integral membrane proteins into the membrane. The sequence is that of Putative membrane protein insertion efficiency factor from Salinibacter ruber (strain DSM 13855 / M31).